Consider the following 167-residue polypeptide: Lipoprotein signal peptidase (167 aa).

A run of 3 helical transmembrane segments spans residues 10–30, 68–88, and 98–118; these read LIWL…KAWV, WQMW…TFWL, and SALP…DRFL. Residues Asp-124 and Asp-142 contribute to the active site. A helical membrane pass occupies residues 138 to 158; the sequence is FNLADSAIVAGAIGIGLLSLF.

It belongs to the peptidase A8 family.

The protein resides in the cell inner membrane. The enzyme catalyses Release of signal peptides from bacterial membrane prolipoproteins. Hydrolyzes -Xaa-Yaa-Zaa-|-(S,diacylglyceryl)Cys-, in which Xaa is hydrophobic (preferably Leu), and Yaa (Ala or Ser) and Zaa (Gly or Ala) have small, neutral side chains.. The protein operates within protein modification; lipoprotein biosynthesis (signal peptide cleavage). This protein specifically catalyzes the removal of signal peptides from prolipoproteins. The sequence is that of Lipoprotein signal peptidase from Xylella fastidiosa (strain M23).